Reading from the N-terminus, the 199-residue chain is dITP/XTP pyrophosphatase (199 aa).

Residue 7 to 12 (TSNRGK) participates in substrate binding. Residue aspartate 74 is the Proton acceptor of the active site. Aspartate 74 is a Mg(2+) binding site. Substrate is bound by residues serine 75, 156 to 159 (FGYD), lysine 179, and 184 to 185 (HR).

Belongs to the HAM1 NTPase family. Homodimer. Requires Mg(2+) as cofactor.

The enzyme catalyses XTP + H2O = XMP + diphosphate + H(+). It carries out the reaction dITP + H2O = dIMP + diphosphate + H(+). It catalyses the reaction ITP + H2O = IMP + diphosphate + H(+). In terms of biological role, pyrophosphatase that catalyzes the hydrolysis of nucleoside triphosphates to their monophosphate derivatives, with a high preference for the non-canonical purine nucleotides XTP (xanthosine triphosphate), dITP (deoxyinosine triphosphate) and ITP. Seems to function as a house-cleaning enzyme that removes non-canonical purine nucleotides from the nucleotide pool, thus preventing their incorporation into DNA/RNA and avoiding chromosomal lesions. The polypeptide is dITP/XTP pyrophosphatase (Sulfurimonas denitrificans (strain ATCC 33889 / DSM 1251) (Thiomicrospira denitrificans (strain ATCC 33889 / DSM 1251))).